The following is a 193-amino-acid chain: Ion-translocating oxidoreductase complex subunit A (193 aa).

The next 6 helical transmembrane spans lie at 5 to 25, 39 to 59, 62 to 82, 102 to 122, 134 to 154, and 171 to 191; these read ALLF…FLGL, IGMG…SWLV, FILV…LVLA, LLGI…VVLL, TIYG…FAAI, and SIAL…TGLV.

The protein belongs to the NqrDE/RnfAE family. As to quaternary structure, the complex is composed of six subunits: RnfA, RnfB, RnfC, RnfD, RnfE and RnfG.

It localises to the cell inner membrane. In terms of biological role, part of a membrane-bound complex that couples electron transfer with translocation of ions across the membrane. In Pectobacterium carotovorum subsp. carotovorum (strain PC1), this protein is Ion-translocating oxidoreductase complex subunit A.